We begin with the raw amino-acid sequence, 86 residues long: UPF0335 protein mll3968 (86 aa).

Belongs to the UPF0335 family.

In Mesorhizobium japonicum (strain LMG 29417 / CECT 9101 / MAFF 303099) (Mesorhizobium loti (strain MAFF 303099)), this protein is UPF0335 protein mll3968.